The primary structure comprises 508 residues: Light-independent protochlorophyllide reductase subunit B (508 aa).

Asp-36 provides a ligand contact to [4Fe-4S] cluster. The active-site Proton donor is Asp-294. Substrate is bound at residue 429–430 (GM).

It belongs to the ChlB/BchB/BchZ family. In terms of assembly, protochlorophyllide reductase is composed of three subunits; ChlL, ChlN and ChlB. Forms a heterotetramer of two ChlB and two ChlN subunits. Requires [4Fe-4S] cluster as cofactor.

It carries out the reaction chlorophyllide a + oxidized 2[4Fe-4S]-[ferredoxin] + 2 ADP + 2 phosphate = protochlorophyllide a + reduced 2[4Fe-4S]-[ferredoxin] + 2 ATP + 2 H2O. Its pathway is porphyrin-containing compound metabolism; chlorophyll biosynthesis (light-independent). Component of the dark-operative protochlorophyllide reductase (DPOR) that uses Mg-ATP and reduced ferredoxin to reduce ring D of protochlorophyllide (Pchlide) to form chlorophyllide a (Chlide). This reaction is light-independent. The NB-protein (ChlN-ChlB) is the catalytic component of the complex. In Acaryochloris marina (strain MBIC 11017), this protein is Light-independent protochlorophyllide reductase subunit B.